We begin with the raw amino-acid sequence, 376 residues long: Protein RecA (376 aa).

79–86 (GPESSGKT) is a binding site for ATP. The interval 357 to 376 (AAARAATDKPVETKGANAAA) is disordered.

Belongs to the RecA family.

It is found in the cytoplasm. Its function is as follows. Can catalyze the hydrolysis of ATP in the presence of single-stranded DNA, the ATP-dependent uptake of single-stranded DNA by duplex DNA, and the ATP-dependent hybridization of homologous single-stranded DNAs. It interacts with LexA causing its activation and leading to its autocatalytic cleavage. The polypeptide is Protein RecA (Synechococcus sp. (strain CC9902)).